The primary structure comprises 342 residues: Mitochondrial sorting homolog (342 aa).

At 1-6 the chain is on the mitochondrial intermembrane side; that stretch reads MTDRNE. The chain crosses the membrane as a helical span at residues 7-25; sequence LIGVAIRVVAAAAVSFLSV. At 26-342 the chain is on the cytoplasmic side; it reads RYLVKYLDPN…AHLLVEETLD (317 aa). Position 124–131 (124–131) interacts with ATP; the sequence is GPPGCGKT.

The protein belongs to the AAA ATPase family.

Its subcellular location is the mitochondrion outer membrane. Functionally, involved in intramitochondrial sorting of proteins. This chain is Mitochondrial sorting homolog (mspn-1), found in Caenorhabditis elegans.